We begin with the raw amino-acid sequence, 314 residues long: MTVAPEDCRLLRLEVRNAQTPIERKPPWIKTRARMGPEYTALKNLVRRVALHTVCEEAGCPNIFECWEDREATFLIGGDQCTRRCDFCQIDTGKPAALDRDEPRRVAESVQTMGLRYTTVTGVARDDLPDGGAWLYATTVRAIKELNPSTGVELLIPDFNGQPARLAEVFDSRPQVLAHNVETVPRIFKRIRPAFTYQRSLDVLTAAREAGLVTKSNLILGLGETADEVRTALADLRKTGCDIVTITQYLRPSMRHHPVERWVRPEEFVEYTQYAEGLGFSGVLGGPLVRSSYRAGRLYEQAAGTRTVGTSVSR.

Positions 55, 60, 66, 81, 85, 88, and 292 each coordinate [4Fe-4S] cluster. The region spanning Trp-67–Ser-281 is the Radical SAM core domain.

It belongs to the radical SAM superfamily. Lipoyl synthase family. It depends on [4Fe-4S] cluster as a cofactor.

It localises to the cytoplasm. It carries out the reaction [[Fe-S] cluster scaffold protein carrying a second [4Fe-4S](2+) cluster] + N(6)-octanoyl-L-lysyl-[protein] + 2 oxidized [2Fe-2S]-[ferredoxin] + 2 S-adenosyl-L-methionine + 4 H(+) = [[Fe-S] cluster scaffold protein] + N(6)-[(R)-dihydrolipoyl]-L-lysyl-[protein] + 4 Fe(3+) + 2 hydrogen sulfide + 2 5'-deoxyadenosine + 2 L-methionine + 2 reduced [2Fe-2S]-[ferredoxin]. Its pathway is protein modification; protein lipoylation via endogenous pathway; protein N(6)-(lipoyl)lysine from octanoyl-[acyl-carrier-protein]: step 2/2. Functionally, catalyzes the radical-mediated insertion of two sulfur atoms into the C-6 and C-8 positions of the octanoyl moiety bound to the lipoyl domains of lipoate-dependent enzymes, thereby converting the octanoylated domains into lipoylated derivatives. The chain is Lipoyl synthase from Mycobacterium leprae (strain Br4923).